Here is a 160-residue protein sequence, read N- to C-terminus: Transcriptional repressor NrdR (160 aa).

The segment at 3–34 (CPACNYNGTKVLDSRPVQDFGSIRRRRECESC) is a zinc-finger region. One can recognise an ATP-cone domain in the interval 49 to 139 (LIIVKKDGTR…VYKQFKDINV (91 aa)).

It belongs to the NrdR family. It depends on Zn(2+) as a cofactor.

Functionally, negatively regulates transcription of bacterial ribonucleotide reductase nrd genes and operons by binding to NrdR-boxes. The protein is Transcriptional repressor NrdR of Exiguobacterium sibiricum (strain DSM 17290 / CCUG 55495 / CIP 109462 / JCM 13490 / 255-15).